The sequence spans 298 residues: Lipoyl synthase (298 aa).

7 residues coordinate [4Fe-4S] cluster: C40, C45, C51, C67, C71, C74, and S280. Residues 53 to 269 form the Radical SAM core domain; sequence AVRKTATFMI…KEIALSKGFS (217 aa).

It belongs to the radical SAM superfamily. Lipoyl synthase family. [4Fe-4S] cluster is required as a cofactor.

It is found in the cytoplasm. It catalyses the reaction [[Fe-S] cluster scaffold protein carrying a second [4Fe-4S](2+) cluster] + N(6)-octanoyl-L-lysyl-[protein] + 2 oxidized [2Fe-2S]-[ferredoxin] + 2 S-adenosyl-L-methionine + 4 H(+) = [[Fe-S] cluster scaffold protein] + N(6)-[(R)-dihydrolipoyl]-L-lysyl-[protein] + 4 Fe(3+) + 2 hydrogen sulfide + 2 5'-deoxyadenosine + 2 L-methionine + 2 reduced [2Fe-2S]-[ferredoxin]. It functions in the pathway protein modification; protein lipoylation via endogenous pathway; protein N(6)-(lipoyl)lysine from octanoyl-[acyl-carrier-protein]. Functionally, catalyzes the radical-mediated insertion of two sulfur atoms into the C-6 and C-8 positions of the octanoyl moiety bound to the lipoyl domains of lipoate-dependent enzymes, thereby converting the octanoylated domains into lipoylated derivatives. The sequence is that of Lipoyl synthase from Bacillus thuringiensis (strain Al Hakam).